The chain runs to 567 residues: Multidrug and toxin extrusion protein 1 (567 aa).

Methionine 1 bears the N-acetylmethionine mark. At 1 to 37 (MERTEESAPGPGGADAASERRGLRCLLLPGFLEELRA) the chain is on the cytoplasmic side. At serine 18 the chain carries Phosphoserine. Residues 38–58 (LLVLAGPAFLAQLMMFLISFI) form a helical membrane-spanning segment. Over 59–72 (SSVFCGHLGKLELD) the chain is Extracellular. Residues 73 to 93 (AVTLAIAVINVTGISVGHGLS) traverse the membrane as a helical segment. At 94–120 (SACDTLISQTYGSQNLKHVGVILQRGT) the chain is on the cytoplasmic side. Residues 121-141 (LILLLCCFPCWALFINTEQIL) form a helical membrane-spanning segment. Residues 142–152 (LLFRQDPDVSR) are Extracellular-facing. Residues 153–173 (LTQTYVMIFIPALPAAFLYTL) form a helical membrane-spanning segment. Residues 174–187 (QVKYLLNQGIVLPQ) lie on the Cytoplasmic side of the membrane. Residues 188 to 208 (IMTGIAANLVNALANYVFLYH) traverse the membrane as a helical segment. Over 209–216 (LHLGVMGS) the chain is Extracellular. The chain crosses the membrane as a helical span at residues 217–237 (ALANTISQFALAIFLFLYILW). The Cytoplasmic segment spans residues 238 to 257 (RRLHQATWGGWSWECLQDWA). A helical membrane pass occupies residues 258 to 277 (SFLRLAIPSMLMLCIEWWAY). Residues 278 to 295 (EVGSFLSGILGMVELGAQ) are Extracellular-facing. The chain crosses the membrane as a helical span at residues 296–316 (SITYELAIIVYMIPSGFSVAA). Residues 317–336 (NVRVGNALGAGNIDQAKKSS) lie on the Cytoplasmic side of the membrane. A helical transmembrane segment spans residues 337 to 357 (AISLIVTELFAVTFCVLLLGC). At 358–370 (KDLVGYIFTTDRD) the chain is on the extracellular side. The helical transmembrane segment at 371-391 (IVALVAQVIPIYAVSHLFEGL) threads the bilayer. Topologically, residues 392–408 (ACTCGGILRGTGNQKVG) are cytoplasmic. A helical membrane pass occupies residues 409 to 429 (AIVNAIGYYVIGLPIGIALMF). The Extracellular portion of the chain corresponds to 430–437 (AAKLGVIG). Residues 438–458 (LWSGIIICTTCQTTCFLAFIA) traverse the membrane as a helical segment. Over 459–543 (RLNWKRACQQ…LSGKQLALRR (85 aa)) the chain is Cytoplasmic. A helical membrane pass occupies residues 544–564 (GLLLLGVVLVLVGGILVRVYI). Residues 565–567 (RIE) lie on the Extracellular side of the membrane.

This sequence belongs to the multi antimicrobial extrusion (MATE) (TC 2.A.66.1) family. As to expression, predominantly expressed in kidney and liver. Also expressed in various cells, including brain glia-like cells and capillaries, pancreatic duct cells, urinary bladder epithelium, adrenal gland cortex, heart, stomach, small intestine, thyroid gland, testes, alpha cells of the islets of Langerhans, Leydig cells, and vitamin A-storing Ito cells. Expressed in heart, stomach, small intestine, bladder, thyroid gland, adrenal gland and testes (at protein level).

Its subcellular location is the cell membrane. It localises to the apical cell membrane. It catalyses the reaction thiamine(out) + H(+)(in) = thiamine(in) + H(+)(out). The catalysed reaction is estrone 3-sulfate(in) + H(+)(out) = estrone 3-sulfate(out) + H(+)(in). The enzyme catalyses creatinine(in) + H(+)(out) = creatinine(out) + H(+)(in). It carries out the reaction agmatine(in) + H(+)(out) = agmatine(out) + H(+)(in). Functionally, multidrug efflux pump that functions as a H(+)/organic cation antiporter. Plays a physiological role in the excretion of cationic compounds including endogenous metabolites, drugs, toxins through the kidney and liver, into urine and bile respectively. Mediates the efflux of endogenous compounds such as creatinine, vitamin B1/thiamine, agmatine and estrone-3-sulfate. May also contribute to regulate the transport of cationic compounds in testis across the blood-testis-barrier. The sequence is that of Multidrug and toxin extrusion protein 1 (Slc47a1) from Mus musculus (Mouse).